The sequence spans 223 residues: AMSH-like ubiquitin thioesterase 2 (223 aa).

In terms of domain architecture, MPN spans 49 to 177 (VHISERLLED…YGIFKLTDPG (129 aa)). The Zn(2+) site is built by His-127, His-129, Asp-140, His-142, Cys-185, His-191, and His-193. Residues 127-140 (HTHPSQGCFMSSVD) carry the JAMM motif motif.

Belongs to the peptidase M67C family. The cofactor is Zn(2+).

Zinc metalloprotease that cleaves 'Lys-48'- and 'Lys-63'-linked polyubiquitin chains. The polypeptide is AMSH-like ubiquitin thioesterase 2 (AMSH2) (Arabidopsis thaliana (Mouse-ear cress)).